Consider the following 468-residue polypeptide: Mitochondrial distribution and morphology protein 10 (468 aa).

It belongs to the MDM10 family. In terms of assembly, component of the ER-mitochondria encounter structure (ERMES) or MDM complex, composed of MMM1, MDM10, MDM12 and MDM34. Associates with the mitochondrial outer membrane sorting assembly machinery SAM(core) complex.

The protein localises to the mitochondrion outer membrane. Its function is as follows. Component of the ERMES/MDM complex, which serves as a molecular tether to connect the endoplasmic reticulum and mitochondria. Components of this complex are involved in the control of mitochondrial shape and protein biogenesis and may function in phospholipid exchange. MDM10 is involved in the late assembly steps of the general translocase of the mitochondrial outer membrane (TOM complex). Functions in the TOM40-specific route of the assembly of outer membrane beta-barrel proteins, including the association of TOM40 with the receptor TOM22 and small TOM proteins. Can associate with the SAM(core) complex as well as the MDM12-MMM1 complex, both involved in late steps of the major beta-barrel assembly pathway, that is responsible for biogenesis of all outer membrane beta-barrel proteins. May act as a switch that shuttles between both complexes and channels precursor proteins into the TOM40-specific pathway. Plays a role in mitochondrial morphology and in the inheritance of mitochondria. The chain is Mitochondrial distribution and morphology protein 10 from Blastomyces gilchristii (strain SLH14081) (Blastomyces dermatitidis).